Reading from the N-terminus, the 122-residue chain is Large ribosomal subunit protein uL14 (122 aa).

Belongs to the universal ribosomal protein uL14 family. In terms of assembly, part of the 50S ribosomal subunit. Forms a cluster with proteins L3 and L19. In the 70S ribosome, L14 and L19 interact and together make contacts with the 16S rRNA in bridges B5 and B8.

Its function is as follows. Binds to 23S rRNA. Forms part of two intersubunit bridges in the 70S ribosome. This Campylobacter concisus (strain 13826) protein is Large ribosomal subunit protein uL14.